The chain runs to 625 residues: ATP-binding cassette sub-family F member 2 (625 aa).

The disordered stretch occupies residues 1–54; it reads MPSDLAKKKAAKKKEAAKARQRPRKGHEENGDAITEPQVAEERNEEANGRETTE. Over residues 40 to 54 the composition is skewed to basic and acidic residues; the sequence is AEERNEEANGRETTE. ABC transporter domains follow at residues 88-327 and 398-615; these read AHII…ENQM and IMVQ…VGEE. 120-127 serves as a coordination point for ATP; the sequence is GLNGIGKS. Residue T220 is modified to Phosphothreonine. N6-acetyllysine is present on K306. 432–439 provides a ligand contact to ATP; sequence GPNGAGKS. S514 carries the phosphoserine modification.

The protein belongs to the ABC transporter superfamily. ABCF family. EF3 subfamily.

The sequence is that of ATP-binding cassette sub-family F member 2 (ABCF2) from Bos taurus (Bovine).